We begin with the raw amino-acid sequence, 200 residues long: MSPIMDALVPMVVEQTSRGERSYDIYSRLLKERVIFLTGQVEDHMANLVVAQLLFLESENPDKDIFLYINSPGGSVTAGMSIYDTMQFIKPNVSTVCMGQACSMGAFLLAGGAAGKRYVLPNSRVMIHQPLGGFQGQASDIQIHAQEILTIKQKLNNLLAEHTGQPLEVIERDTDRDNFMSAEQAVEYGIVDAVLSHRGA.

The active-site Nucleophile is the Ser103. His128 is an active-site residue.

It belongs to the peptidase S14 family. In terms of assembly, fourteen ClpP subunits assemble into 2 heptameric rings which stack back to back to give a disk-like structure with a central cavity, resembling the structure of eukaryotic proteasomes.

Its subcellular location is the cytoplasm. It carries out the reaction Hydrolysis of proteins to small peptides in the presence of ATP and magnesium. alpha-casein is the usual test substrate. In the absence of ATP, only oligopeptides shorter than five residues are hydrolyzed (such as succinyl-Leu-Tyr-|-NHMec, and Leu-Tyr-Leu-|-Tyr-Trp, in which cleavage of the -Tyr-|-Leu- and -Tyr-|-Trp bonds also occurs).. Its function is as follows. Cleaves peptides in various proteins in a process that requires ATP hydrolysis. Has a chymotrypsin-like activity. Plays a major role in the degradation of misfolded proteins. This Vibrio parahaemolyticus serotype O3:K6 (strain RIMD 2210633) protein is ATP-dependent Clp protease proteolytic subunit.